The sequence spans 372 residues: N-methyl-L-tryptophan oxidase (372 aa).

4-34 (DLIIIGSGSVGAAAGYYATRAGLNVLMTDAH) provides a ligand contact to FAD. Residue cysteine 308 is modified to S-8alpha-FAD cysteine.

Belongs to the MSOX/MTOX family. MTOX subfamily. As to quaternary structure, monomer. The cofactor is FAD.

The enzyme catalyses N(alpha)-methyl-L-tryptophan + O2 + H2O = L-tryptophan + formaldehyde + H2O2. Its function is as follows. Catalyzes the oxidative demethylation of N-methyl-L-tryptophan. The sequence is that of N-methyl-L-tryptophan oxidase from Shigella flexneri serotype 5b (strain 8401).